The chain runs to 210 residues: Orotate phosphoribosyltransferase (210 aa).

5-phospho-alpha-D-ribose 1-diphosphate contacts are provided by residues arginine 94, lysine 98, histidine 100, and 120–128 (EDLISTGGS). Residue serine 124 participates in orotate binding.

The protein belongs to the purine/pyrimidine phosphoribosyltransferase family. PyrE subfamily. As to quaternary structure, homodimer. It depends on Mg(2+) as a cofactor.

It carries out the reaction orotidine 5'-phosphate + diphosphate = orotate + 5-phospho-alpha-D-ribose 1-diphosphate. It functions in the pathway pyrimidine metabolism; UMP biosynthesis via de novo pathway; UMP from orotate: step 1/2. Its function is as follows. Catalyzes the transfer of a ribosyl phosphate group from 5-phosphoribose 1-diphosphate to orotate, leading to the formation of orotidine monophosphate (OMP). The chain is Orotate phosphoribosyltransferase from Bacillus mycoides (strain KBAB4) (Bacillus weihenstephanensis).